Consider the following 165-residue polypeptide: Small ribosomal subunit protein bS16 (165 aa).

It belongs to the bacterial ribosomal protein bS16 family.

This Azobacteroides pseudotrichonymphae genomovar. CFP2 protein is Small ribosomal subunit protein bS16.